A 490-amino-acid chain; its full sequence is Probable glycine dehydrogenase (decarboxylating) subunit 2 (490 aa).

An N6-(pyridoxal phosphate)lysine modification is found at K273.

Belongs to the GcvP family. C-terminal subunit subfamily. In terms of assembly, the glycine cleavage system is composed of four proteins: P, T, L and H. In this organism, the P 'protein' is a heterodimer of two subunits. The cofactor is pyridoxal 5'-phosphate.

The catalysed reaction is N(6)-[(R)-lipoyl]-L-lysyl-[glycine-cleavage complex H protein] + glycine + H(+) = N(6)-[(R)-S(8)-aminomethyldihydrolipoyl]-L-lysyl-[glycine-cleavage complex H protein] + CO2. Its function is as follows. The glycine cleavage system catalyzes the degradation of glycine. The P protein binds the alpha-amino group of glycine through its pyridoxal phosphate cofactor; CO(2) is released and the remaining methylamine moiety is then transferred to the lipoamide cofactor of the H protein. The protein is Probable glycine dehydrogenase (decarboxylating) subunit 2 of Staphylococcus aureus (strain Mu50 / ATCC 700699).